Consider the following 462-residue polypeptide: Metacaspase-1 (462 aa).

The segment covering 1–21 (MSYYPPPSGYPGGPPAYPPPQ) has biased composition (pro residues). The interval 1-150 (MSYYPPPSGY…PPPPSGSVAF (150 aa)) is disordered. Residues 22–33 (QQQQQQQQYPSY) show a composition bias toward low complexity. Pro residues-rich tracts occupy residues 49-69 (PSYPPPGQYGHPPQPGYPPHS) and 77-102 (SPQPPYGHPPPQHPPHQPPHRPPPSP). Active-site residues include His-253 and Cys-309.

It belongs to the peptidase C14B family.

Functionally, involved in cell death (apoptosis). The polypeptide is Metacaspase-1 (MCA1) (Coccidioides immitis (strain RS) (Valley fever fungus)).